Reading from the N-terminus, the 501-residue chain is NADH-quinone oxidoreductase subunit M (501 aa).

Helical transmembrane passes span 1–21 (MLLS…FFSF), 30–50 (WIAL…WFFE), 86–106 (FSIV…LCSW), 115–134 (FFYL…FIAF), 139–156 (FFFF…LISL), 174–194 (FFIY…LLVL), 222–242 (IIML…PFHG), 252–272 (PYCG…YGLL), 286–306 (FAPI…WVAF), 314–331 (LIAY…IAIY), 341–363 (LIIQ…GQIY), 374–394 (MGGL…FALS), 420–440 (LVSI…LNMI), and 459–479 (IKEF…GLIP).

This sequence belongs to the complex I subunit 4 family. As to quaternary structure, composed of 13 different subunits. Subunits NuoA, H, J, K, L, M, N constitute the membrane sector of the complex.

The protein localises to the cell membrane. It carries out the reaction a quinone + NADH + 5 H(+)(in) = a quinol + NAD(+) + 4 H(+)(out). Its function is as follows. NDH-1 shuttles electrons from NADH, via FMN and iron-sulfur (Fe-S) centers, to quinones in the respiratory chain. Couples the redox reaction to proton translocation (for every two electrons transferred, four hydrogen ions are translocated across the cytoplasmic membrane), and thus conserves the redox energy in a proton gradient. This Buchnera aphidicola subsp. Schizaphis graminum (strain Sg) protein is NADH-quinone oxidoreductase subunit M (nuoM).